A 141-amino-acid chain; its full sequence is Histone H2B (141 aa).

Positions 1–10 are enriched in basic and acidic residues; that stretch reads MPPKAAEKKP. Positions 1 to 49 are disordered; it reads MPPKAAEKKPSTGGKAPAGGKAPAEKKEAGKKTAAAASGDKKKRGKTRK. An N6-acetyllysine; alternate mark is found at K8 and K9. Residues K8 and K9 each participate in a glycyl lysine isopeptide (Lys-Gly) (interchain with G-Cter in SUMO); alternate cross-link. The span at 11-22 shows a compositional bias: low complexity; sequence STGGKAPAGGKA. K15 is modified (N6-acetyllysine). K26 bears the N6-acetyllysine; alternate mark. A Glycyl lysine isopeptide (Lys-Gly) (interchain with G-Cter in SUMO); alternate cross-link involves residue K26. Residue K27 forms a Glycyl lysine isopeptide (Lys-Gly) (interchain with G-Cter in SUMO) linkage. A Glycyl lysine isopeptide (Lys-Gly) (interchain with G-Cter in ubiquitin) cross-link involves residue K135.

The protein belongs to the histone H2B family. The nucleosome is a histone octamer containing two molecules each of H2A, H2B, H3 and H4 assembled in one H3-H4 heterotetramer and two H2A-H2B heterodimers. The octamer wraps approximately 147 bp of DNA. Monoubiquitinated by the ubc2-bre1 complex to form H2BK123ub1. H2BK123ub1 gives a specific tag for epigenetic transcriptional activation and is also prerequisite for H3K4me and H3K79me formation. H2BK123ub1 also modulates the formation of double-strand breaks during meiosis and is a prerequisite for DNA-damage checkpoint activation. In terms of processing, acetylated by gcn5 to form H2BK11ac and H2BK16ac. H2BK16ac can also be formed by esa1. Acetylation of N-terminal lysines and particularly formation of H2BK11acK16ac has a positive effect on transcription. Post-translationally, sumoylation to form H2BK6su or H2BK7su, and probably also H2BK16su or H2BK17su, occurs preferentially near the telomeres and represses gene transcription.

The protein localises to the nucleus. Its subcellular location is the chromosome. Core component of nucleosome. Nucleosomes wrap and compact DNA into chromatin, limiting DNA accessibility to the cellular machineries which require DNA as a template. Histones thereby play a central role in transcription regulation, DNA repair, DNA replication and chromosomal stability. DNA accessibility is regulated via a complex set of post-translational modifications of histones, also called histone code, and nucleosome remodeling. This chain is Histone H2B (htb1), found in Aspergillus niger (strain ATCC MYA-4892 / CBS 513.88 / FGSC A1513).